Here is a 319-residue protein sequence, read N- to C-terminus: Cytochrome c biogenesis protein CcsA (319 aa).

8 helical membrane passes run 14-34 (AFGG…FPGI), 36-56 (GLNR…TLTL), 69-89 (SNLY…HLFI), 97-117 (LIGA…SLAL), 142-162 (IMML…LFLI), 227-247 (TIGL…VWAN), 254-274 (WSWD…AAYL), and 288-308 (AILA…VNFL).

This sequence belongs to the CcmF/CycK/Ccl1/NrfE/CcsA family. May interact with Ccs1.

Its subcellular location is the plastid. The protein resides in the chloroplast thylakoid membrane. Functionally, required during biogenesis of c-type cytochromes (cytochrome c6 and cytochrome f) at the step of heme attachment. This chain is Cytochrome c biogenesis protein CcsA, found in Pyropia yezoensis (Susabi-nori).